Reading from the N-terminus, the 158-residue chain is Phosphopantetheine adenylyltransferase (158 aa).

Residue threonine 10 participates in substrate binding. ATP is bound by residues 10–11 and histidine 18; that span reads TF. Substrate is bound by residues lysine 42, leucine 74, and arginine 88. Residues 89–91, glutamate 99, and 124–130 each bind ATP; these read GLR and YSFISSS.

This sequence belongs to the bacterial CoaD family. In terms of assembly, homohexamer. Requires Mg(2+) as cofactor.

The protein localises to the cytoplasm. It carries out the reaction (R)-4'-phosphopantetheine + ATP + H(+) = 3'-dephospho-CoA + diphosphate. It functions in the pathway cofactor biosynthesis; coenzyme A biosynthesis; CoA from (R)-pantothenate: step 4/5. In terms of biological role, reversibly transfers an adenylyl group from ATP to 4'-phosphopantetheine, yielding dephospho-CoA (dPCoA) and pyrophosphate. The sequence is that of Phosphopantetheine adenylyltransferase from Erwinia tasmaniensis (strain DSM 17950 / CFBP 7177 / CIP 109463 / NCPPB 4357 / Et1/99).